The sequence spans 448 residues: Squalene synthase ERG9 (448 aa).

Residues 420–440 (RIEPGNFNCNVVLFGIGALIL) form a helical membrane-spanning segment.

It belongs to the phytoene/squalene synthase family. The cofactor is Mg(2+).

It localises to the endoplasmic reticulum membrane. The protein resides in the microsome. It catalyses the reaction 2 (2E,6E)-farnesyl diphosphate + NADPH + H(+) = squalene + 2 diphosphate + NADP(+). The enzyme catalyses 2 (2E,6E)-farnesyl diphosphate + NADH + H(+) = squalene + 2 diphosphate + NAD(+). It functions in the pathway terpene metabolism; lanosterol biosynthesis; lanosterol from farnesyl diphosphate: step 1/3. In terms of biological role, squalene synthase; part of the third module of ergosterol biosynthesis pathway that includes the late steps of the pathway. ERG9 produces squalene from 2 farnesyl pyrophosphate moieties. The third module or late pathway involves the ergosterol synthesis itself through consecutive reactions that mainly occur in the endoplasmic reticulum (ER) membrane. Firstly, the squalene synthase ERG9 catalyzes the condensation of 2 farnesyl pyrophosphate moieties to form squalene, which is the precursor of all steroids. Squalene synthase is crucial for balancing the incorporation of farnesyl diphosphate (FPP) into sterol and nonsterol isoprene synthesis. Secondly, the squalene epoxidase ERG1 catalyzes the stereospecific oxidation of squalene to (S)-2,3-epoxysqualene, which is considered to be a rate-limiting enzyme in steroid biosynthesis. Then, the lanosterol synthase ERG7 catalyzes the cyclization of (S)-2,3 oxidosqualene to lanosterol, a reaction that forms the sterol core. In the next steps, lanosterol is transformed to zymosterol through a complex process involving various demethylation, reduction and desaturation reactions. The lanosterol 14-alpha-demethylase ERG11 (also known as CYP51) catalyzes C14-demethylation of lanosterol to produce 4,4'-dimethyl cholesta-8,14,24-triene-3-beta-ol, which is critical for ergosterol biosynthesis. The C-14 reductase ERG24 reduces the C14=C15 double bond of 4,4-dimethyl-cholesta-8,14,24-trienol to produce 4,4-dimethyl-cholesta-8,24-dienol. 4,4-dimethyl-cholesta-8,24-dienol is substrate of the C-4 demethylation complex ERG25-ERG26-ERG27 in which ERG25 catalyzes the three-step monooxygenation required for the demethylation of 4,4-dimethyl and 4alpha-methylsterols, ERG26 catalyzes the oxidative decarboxylation that results in a reduction of the 3-beta-hydroxy group at the C-3 carbon to an oxo group, and ERG27 is responsible for the reduction of the keto group on the C-3. ERG28 has a role as a scaffold to help anchor ERG25, ERG26 and ERG27 to the endoplasmic reticulum and ERG29 regulates the activity of the iron-containing C4-methylsterol oxidase ERG25. Then, the sterol 24-C-methyltransferase ERG6 catalyzes the methyl transfer from S-adenosyl-methionine to the C-24 of zymosterol to form fecosterol. The C-8 sterol isomerase ERG2 catalyzes the reaction which results in unsaturation at C-7 in the B ring of sterols and thus converts fecosterol to episterol. The sterol-C5-desaturase ERG3 then catalyzes the introduction of a C-5 double bond in the B ring to produce 5-dehydroepisterol. The C-22 sterol desaturase ERG5 further converts 5-dehydroepisterol into ergosta-5,7,22,24(28)-tetraen-3beta-ol by forming the C-22(23) double bond in the sterol side chain. Finally, ergosta-5,7,22,24(28)-tetraen-3beta-ol is substrate of the C-24(28) sterol reductase ERG4 to produce ergosterol. The chain is Squalene synthase ERG9 from Candida albicans (Yeast).